Consider the following 101-residue polypeptide: NADH-quinone oxidoreductase subunit K (101 aa).

3 helical membrane passes run 4–24, 29–49, and 61–81; these read LAHY…GIFL, IIII…NFVA, and IFVF…LAIL.

It belongs to the complex I subunit 4L family. NDH-1 is composed of 14 different subunits. Subunits NuoA, H, J, K, L, M, N constitute the membrane sector of the complex.

The protein localises to the cell inner membrane. It catalyses the reaction a quinone + NADH + 5 H(+)(in) = a quinol + NAD(+) + 4 H(+)(out). In terms of biological role, NDH-1 shuttles electrons from NADH, via FMN and iron-sulfur (Fe-S) centers, to quinones in the respiratory chain. The immediate electron acceptor for the enzyme in this species is believed to be ubiquinone. Couples the redox reaction to proton translocation (for every two electrons transferred, four hydrogen ions are translocated across the cytoplasmic membrane), and thus conserves the redox energy in a proton gradient. This Burkholderia vietnamiensis (strain G4 / LMG 22486) (Burkholderia cepacia (strain R1808)) protein is NADH-quinone oxidoreductase subunit K.